A 426-amino-acid chain; its full sequence is 5-methylthioadenosine/S-adenosylhomocysteine deaminase (426 aa).

Residues His60 and His62 each contribute to the Zn(2+) site. Residues Glu89 and His179 each contribute to the substrate site. Zn(2+) is bound at residue His206. Substrate is bound by residues Glu209 and Asp294. Asp294 serves as a coordination point for Zn(2+).

It belongs to the metallo-dependent hydrolases superfamily. MTA/SAH deaminase family. Requires Zn(2+) as cofactor.

The enzyme catalyses S-adenosyl-L-homocysteine + H2O + H(+) = S-inosyl-L-homocysteine + NH4(+). It catalyses the reaction S-methyl-5'-thioadenosine + H2O + H(+) = S-methyl-5'-thioinosine + NH4(+). Its function is as follows. Catalyzes the deamination of 5-methylthioadenosine and S-adenosyl-L-homocysteine into 5-methylthioinosine and S-inosyl-L-homocysteine, respectively. Is also able to deaminate adenosine. This chain is 5-methylthioadenosine/S-adenosylhomocysteine deaminase, found in Dictyoglomus turgidum (strain DSM 6724 / Z-1310).